The sequence spans 365 residues: tRNA 2-selenouridine synthase (365 aa).

The region spanning leucine 15–aspartate 138 is the Rhodanese domain. Cysteine 98 acts as the S-selanylcysteine intermediate in catalysis.

Belongs to the SelU family. In terms of assembly, monomer.

It carries out the reaction 5-methylaminomethyl-2-thiouridine(34) in tRNA + selenophosphate + (2E)-geranyl diphosphate + H2O + H(+) = 5-methylaminomethyl-2-selenouridine(34) in tRNA + (2E)-thiogeraniol + phosphate + diphosphate. The catalysed reaction is 5-methylaminomethyl-2-thiouridine(34) in tRNA + (2E)-geranyl diphosphate = 5-methylaminomethyl-S-(2E)-geranyl-thiouridine(34) in tRNA + diphosphate. It catalyses the reaction 5-methylaminomethyl-S-(2E)-geranyl-thiouridine(34) in tRNA + selenophosphate + H(+) = 5-methylaminomethyl-2-(Se-phospho)selenouridine(34) in tRNA + (2E)-thiogeraniol. The enzyme catalyses 5-methylaminomethyl-2-(Se-phospho)selenouridine(34) in tRNA + H2O = 5-methylaminomethyl-2-selenouridine(34) in tRNA + phosphate. Involved in the post-transcriptional modification of the uridine at the wobble position (U34) of tRNA(Lys), tRNA(Glu) and tRNA(Gln). Catalyzes the conversion of 2-thiouridine (S2U-RNA) to 2-selenouridine (Se2U-RNA). Acts in a two-step process involving geranylation of 2-thiouridine (S2U) to S-geranyl-2-thiouridine (geS2U) and subsequent selenation of the latter derivative to 2-selenouridine (Se2U) in the tRNA chain. This chain is tRNA 2-selenouridine synthase, found in Shewanella pealeana (strain ATCC 700345 / ANG-SQ1).